A 475-amino-acid polypeptide reads, in one-letter code: Glycogen synthase (475 aa).

Lysine 15 is an ADP-alpha-D-glucose binding site.

It belongs to the glycosyltransferase 1 family. Bacterial/plant glycogen synthase subfamily.

The catalysed reaction is [(1-&gt;4)-alpha-D-glucosyl](n) + ADP-alpha-D-glucose = [(1-&gt;4)-alpha-D-glucosyl](n+1) + ADP + H(+). The protein operates within glycan biosynthesis; glycogen biosynthesis. Functionally, synthesizes alpha-1,4-glucan chains using ADP-glucose. In Anaeromyxobacter sp. (strain K), this protein is Glycogen synthase.